A 232-amino-acid polypeptide reads, in one-letter code: Single-stranded DNA-binding protein (232 aa).

Residues 189–232 form a disordered region; sequence DWADEVEENGYVASGSAKASKPRDEESWDEDDEESEEADEDGDF. Positions 212-232 are dimerization and interaction with the viral DNA polymerase and helicase; that stretch reads DEESWDEDDEESEEADEDGDF. The span at 214-232 shows a compositional bias: acidic residues; sequence ESWDEDDEESEEADEDGDF.

It belongs to the Teseptimavirus single-stranded DNA-binding protein family. In terms of assembly, homodimer. Interacts (via C-terminus) with the viral DNA polymerase. Interacts with the viral helicase/primase. Part of the replicase complex that includes the DNA polymerase, host thioredoxin, the primase/helicase and the single-stranded DNA binding protein.

In terms of biological role, single-stranded DNA-binding protein that participates in viral DNA replication, formation of concatemers, recombination and repair of double-stranded breaks. Coats the lagging-strand ssDNA as the replication fork advances and stimulates the activities of viral DNA polymerase and primase/helicase. Coordinates simultaneous synthesis of leading- and lagging-strands. Together with DNA primase/helicase, promotes pairing of two homologous DNA molecules containing complementary single-stranded regions and mediates homologous DNA strand exchange. Also promotes the formation of joint molecules. Disrupts loops, hairpins and other secondary structures present on ssDNA to reduce and eliminate pausing of viral DNA polymerase at specific sites during elongation. This chain is Single-stranded DNA-binding protein, found in Escherichia phage T7 (Bacteriophage T7).